We begin with the raw amino-acid sequence, 831 residues long: Cadherin-related family member 3 (831 aa).

A signal peptide spans 1-19; it reads MQGAVIVLVLFGITSGGEA. Topologically, residues 20-711 are extracellular; it reads LHLLHLPATS…VYSTSAWYVP (692 aa). Cadherin domains lie at 24–132, 136–236, 237–344, 346–466, 462–570, and 567–693; these read HLPA…PPQF, LAQG…TPRF, TSPR…NPAT, RKLT…RPSY, ERPS…TPNF, and TPNF…RPRI. Residues Asn47, Asn186, and Asn257 are each glycosylated (N-linked (GlcNAc...) asparagine). A helical transmembrane segment spans residues 712 to 732; sequence FIVTLGSILLLGLLGSLMVLL. At 733-831 the chain is on the cytoplasmic side; the sequence is SKAVYRHCSS…EAPVPKHTGR (99 aa). Disordered stretches follow at residues 743 to 763 and 798 to 831; these read TTRR…MNRE and RWKG…HTGR. Basic and acidic residues predominate over residues 749 to 763; sequence KPLTKKRDTKRMNRE. Residues 805 to 817 show a composition bias toward polar residues; sequence QLPNWPEPSTQHR.

The protein localises to the cell membrane. Functionally, cadherins are calcium-dependent cell adhesion proteins. They preferentially interact with themselves in a homophilic manner in connecting cells; cadherins may thus contribute to the sorting of heterogeneous cell types. The protein is Cadherin-related family member 3 (Cdhr3) of Mus musculus (Mouse).